The primary structure comprises 305 residues: UDP-N-acetylenolpyruvoylglucosamine reductase 2 (305 aa).

The region spanning 33–197 (VGGKADVFVA…LEARFELEEG (165 aa)) is the FAD-binding PCMH-type domain. Arg-176 is a catalytic residue. The active-site Proton donor is the Ser-226. Glu-296 is a catalytic residue.

The protein belongs to the MurB family. Requires FAD as cofactor.

It is found in the cytoplasm. The catalysed reaction is UDP-N-acetyl-alpha-D-muramate + NADP(+) = UDP-N-acetyl-3-O-(1-carboxyvinyl)-alpha-D-glucosamine + NADPH + H(+). Its pathway is cell wall biogenesis; peptidoglycan biosynthesis. Functionally, cell wall formation. In Bacillus thuringiensis subsp. konkukian (strain 97-27), this protein is UDP-N-acetylenolpyruvoylglucosamine reductase 2.